A 204-amino-acid polypeptide reads, in one-letter code: Guanylate kinase (204 aa).

In terms of domain architecture, Guanylate kinase-like spans 5-184 (GLLLVLSGPS…AVDHIKAIVD (180 aa)). Residue 12 to 19 (GPSGVGKG) participates in ATP binding.

It belongs to the guanylate kinase family.

The protein localises to the cytoplasm. It carries out the reaction GMP + ATP = GDP + ADP. Its function is as follows. Essential for recycling GMP and indirectly, cGMP. The polypeptide is Guanylate kinase (Lactobacillus acidophilus (strain ATCC 700396 / NCK56 / N2 / NCFM)).